Reading from the N-terminus, the 149-residue chain is Large ribosomal subunit protein bL9 (149 aa).

Belongs to the bacterial ribosomal protein bL9 family.

Binds to the 23S rRNA. The protein is Large ribosomal subunit protein bL9 of Salinibacter ruber (strain DSM 13855 / M31).